Reading from the N-terminus, the 716-residue chain is Fatty acid oxidation complex subunit alpha (716 aa).

The segment at Met-1 to Ala-189 is enoyl-CoA hydratase/isomerase. Position 296 (Asp-296) interacts with substrate. Positions Gln-311–Ala-716 are 3-hydroxyacyl-CoA dehydrogenase. Residues Met-324, Asp-343, Val-400–Glu-402, Lys-407, and Ser-429 contribute to the NAD(+) site. His-450 acts as the For 3-hydroxyacyl-CoA dehydrogenase activity in catalysis. Asn-453 contacts NAD(+). Asn-500 and Tyr-660 together coordinate substrate.

In the N-terminal section; belongs to the enoyl-CoA hydratase/isomerase family. It in the C-terminal section; belongs to the 3-hydroxyacyl-CoA dehydrogenase family. Heterotetramer of two alpha chains (FadB) and two beta chains (FadA).

It catalyses the reaction a (3S)-3-hydroxyacyl-CoA + NAD(+) = a 3-oxoacyl-CoA + NADH + H(+). The enzyme catalyses a (3S)-3-hydroxyacyl-CoA = a (2E)-enoyl-CoA + H2O. The catalysed reaction is a 4-saturated-(3S)-3-hydroxyacyl-CoA = a (3E)-enoyl-CoA + H2O. It carries out the reaction (3S)-3-hydroxybutanoyl-CoA = (3R)-3-hydroxybutanoyl-CoA. It catalyses the reaction a (3Z)-enoyl-CoA = a 4-saturated (2E)-enoyl-CoA. The enzyme catalyses a (3E)-enoyl-CoA = a 4-saturated (2E)-enoyl-CoA. It functions in the pathway lipid metabolism; fatty acid beta-oxidation. In terms of biological role, involved in the aerobic and anaerobic degradation of long-chain fatty acids via beta-oxidation cycle. Catalyzes the formation of 3-oxoacyl-CoA from enoyl-CoA via L-3-hydroxyacyl-CoA. It can also use D-3-hydroxyacyl-CoA and cis-3-enoyl-CoA as substrate. In Shewanella loihica (strain ATCC BAA-1088 / PV-4), this protein is Fatty acid oxidation complex subunit alpha.